Here is a 369-residue protein sequence, read N- to C-terminus: Flagellar P-ring protein (369 aa).

The first 22 residues, 1-22 (MIKLKQLIAATLLLSAAFGAHA), serve as a signal peptide directing secretion.

The protein belongs to the FlgI family. The basal body constitutes a major portion of the flagellar organelle and consists of four rings (L,P,S, and M) mounted on a central rod.

The protein resides in the periplasm. It is found in the bacterial flagellum basal body. Its function is as follows. Assembles around the rod to form the L-ring and probably protects the motor/basal body from shearing forces during rotation. The chain is Flagellar P-ring protein from Pseudomonas syringae pv. tomato (strain ATCC BAA-871 / DC3000).